The following is a 244-amino-acid chain: 1-(5-phosphoribosyl)-5-[(5-phosphoribosylamino)methylideneamino] imidazole-4-carboxamide isomerase (244 aa).

Catalysis depends on Asp-8, which acts as the Proton acceptor. The active-site Proton donor is Asp-129.

This sequence belongs to the HisA/HisF family.

The protein localises to the cytoplasm. It catalyses the reaction 1-(5-phospho-beta-D-ribosyl)-5-[(5-phospho-beta-D-ribosylamino)methylideneamino]imidazole-4-carboxamide = 5-[(5-phospho-1-deoxy-D-ribulos-1-ylimino)methylamino]-1-(5-phospho-beta-D-ribosyl)imidazole-4-carboxamide. Its pathway is amino-acid biosynthesis; L-histidine biosynthesis; L-histidine from 5-phospho-alpha-D-ribose 1-diphosphate: step 4/9. This chain is 1-(5-phosphoribosyl)-5-[(5-phosphoribosylamino)methylideneamino] imidazole-4-carboxamide isomerase, found in Maricaulis maris (strain MCS10) (Caulobacter maris).